We begin with the raw amino-acid sequence, 853 residues long: Auxin response factor 23 (853 aa).

Residues 118–141 (PESKQQEDNGSTEEEVPSAPAAGH) are disordered. A DNA-binding region (TF-B3) is located at residues 149–251 (FCKTLTASDT…ELRVGVRRAM (103 aa)). Disordered regions lie at residues 422 to 484 (ESEP…RMQM) and 647 to 723 (PAKS…QGVS). Polar residues predominate over residues 425–455 (PNGTQRTFQTQENATPKSGFGNSSELESAQK). Over residues 672-686 (EWRRPDVTEVEKCSD) the composition is skewed to basic and acidic residues. A compositionally biased stretch (polar residues) spans 706–723 (PSSQQASRNMSCKSQGVS). Residues 725 to 809 (RSCKKVHKQG…HKIFIYTREE (85 aa)) enclose the PB1 domain. The disordered stretch occupies residues 815–853 (PGTLNSRSEDSHANSMERGSVGREMRGCLSTSSLNSENC). A compositionally biased stretch (polar residues) spans 843-853 (LSTSSLNSENC).

The protein belongs to the ARF family. As to quaternary structure, homodimers and heterodimers. Interacts with CRL1. In terms of tissue distribution, expressed in roots, culms, leaves and young panicles.

It is found in the nucleus. Its function is as follows. Auxin response factors (ARFs) are transcriptional factors that bind specifically to the DNA sequence 5'-TGTCTC-3' found in the auxin-responsive promoter elements (AuxREs). In Oryza sativa subsp. japonica (Rice), this protein is Auxin response factor 23 (ARF23).